Here is a 636-residue protein sequence, read N- to C-terminus: Ubiquitin-activating enzyme E1-like (636 aa).

ATP contacts are provided by residues 28 to 33 (GAGGIG), D52, 60 to 63 (NLNR), K76, and 121 to 126 (DNLAAR). Positions 162 and 165 each coordinate Zn(2+). C177 functions as the Glycyl thioester intermediate in the catalytic mechanism. 2 residues coordinate Zn(2+): C435 and C438. Positions 581–636 (DGIVILDDDEGEITIDAEPINGSKKRPVDTEISEAPSNKRTKLVNEPTNSDIVELD) are disordered. A compositionally biased stretch (acidic residues) spans 586–595 (LDDDEGEITI). The short motif at 619–622 (KRTK) is the Nuclear localization signal element. Over residues 626-636 (EPTNSDIVELD) the composition is skewed to polar residues.

The protein belongs to the ubiquitin-activating E1 family. As to quaternary structure, heterodimer of UBA2 and AOS1. The complex binds SMT3. Post-translationally, multiubiquitinated in vivo.

It localises to the nucleus. It participates in protein modification; protein sumoylation. The dimeric enzyme acts as a SMT3 E1 ligase. It mediates ATP-dependent activation of SMT3 and formation of a thioester with a conserved cysteine residue on AOS1. The sequence is that of Ubiquitin-activating enzyme E1-like (UBA2) from Saccharomyces cerevisiae (strain ATCC 204508 / S288c) (Baker's yeast).